The following is a 613-amino-acid chain: Threonine--tRNA ligase (613 aa).

The segment at 1–147 is editing domain; that stretch reads MRLLLIHARS…TITPQESAPQ (147 aa). Catalytic stretches follow at residues 199–495 and 200–495; these read PRYI…PALP and RYID…PALP. Residues Cys-292, His-343, and His-464 each contribute to the Zn(2+) site.

The protein belongs to the class-II aminoacyl-tRNA synthetase family. Homodimer. Zn(2+) serves as cofactor.

Its subcellular location is the cytoplasm. The enzyme catalyses tRNA(Thr) + L-threonine + ATP = L-threonyl-tRNA(Thr) + AMP + diphosphate + H(+). Its function is as follows. Catalyzes the attachment of threonine to tRNA(Thr) in a two-step reaction: L-threonine is first activated by ATP to form Thr-AMP and then transferred to the acceptor end of tRNA(Thr). Also edits incorrectly charged L-seryl-tRNA(Thr). The chain is Threonine--tRNA ligase from Caldivirga maquilingensis (strain ATCC 700844 / DSM 13496 / JCM 10307 / IC-167).